The chain runs to 229 residues: MAGHDSGSAKRGRSPSFGVFVRKPVERAPTKGAGDGAADSEAIRIDAAQPWPDDAVEVGAVVDAYGLKGWVKLVAHAGAGRGGDALLKARDWWLQKGGERKFARVTQAKLHSDAVVAHPAGSVDRDTALALRGFRVFVRRGDFPALAADEFYWVDLIGLDVVNEAGVALGKVADMIDNGVHSIMRVEYPATGKDGRPTTGERLIPFVGVYVKAVEQAAGRIVVDWEADY.

Residues M1–D39 are disordered. The 82-residue stretch at A148–Y229 folds into the PRC barrel domain.

It belongs to the RimM family. In terms of assembly, binds ribosomal protein uS19.

The protein localises to the cytoplasm. Functionally, an accessory protein needed during the final step in the assembly of 30S ribosomal subunit, possibly for assembly of the head region. Essential for efficient processing of 16S rRNA. May be needed both before and after RbfA during the maturation of 16S rRNA. It has affinity for free ribosomal 30S subunits but not for 70S ribosomes. This Burkholderia thailandensis (strain ATCC 700388 / DSM 13276 / CCUG 48851 / CIP 106301 / E264) protein is Ribosome maturation factor RimM.